The following is a 407-amino-acid chain: Naringenin 8-dimethylallyltransferase 2, chloroplastic (407 aa).

The N-terminal 23 residues, 1–23, are a transit peptide targeting the chloroplast; that stretch reads MGFVLPASFPGASSITTGGSCLR. A run of 8 helical transmembrane segments spans residues 117–137, 145–165, 206–226, 248–268, 285–305, 328–348, 352–372, and 383–403; these read FCRP…SLVA, SLAF…IHIF, ILGL…TVFI, VLTA…GFFL, LIFC…FKDI, VFWI…LVGA, ILWS…VLWY, and VVLQ…YCLI.

It belongs to the UbiA prenyltransferase family. The cofactor is Mg(2+). Requires Mn(2+) as cofactor.

The protein resides in the plastid. Its subcellular location is the chloroplast membrane. It carries out the reaction (2S)-naringenin + dimethylallyl diphosphate = sophoraflavanone B + diphosphate. In terms of biological role, involved in the biosynthesis of sophoraflavanone G (SFG). Can use flavanones (naringenin, liquiritigenin and hesperetin) as substrates, but not flavonols or isoflavones. Shows a strict specificity for dimethylallyl diphosphate. The chain is Naringenin 8-dimethylallyltransferase 2, chloroplastic (N8DT-2) from Sophora flavescens (Shrubby sophora).